Here is a 670-residue protein sequence, read N- to C-terminus: Beta-fructofuranosidase 1 (670 aa).

Residues 1-40 are disordered; that stretch reads MIPAVADPTTLDGGGARRPLLPETDPRGRAAAGAEQKRPP. The Cytoplasmic segment spans residues 1–44; that stretch reads MIPAVADPTTLDGGGARRPLLPETDPRGRAAAGAEQKRPPATPT. Positions 1-112 are cleaved as a propeptide — removed in mature form; that stretch reads MIPAVADPTT…APLLGSGALQ (112 aa). Residues 45–65 form a helical; Signal-anchor for type II membrane protein membrane-spanning segment; sequence VLTAVVSAVLLLVLVAVTVLA. Residues 66–670 are Lumenal-facing; it reads SQHVDGQAGG…RPYPATTTSL (605 aa). Substrate contacts are provided by residues 136 to 139, Gln-155, and Trp-163; that span reads WMND. The active site involves Asp-139. An N-linked (GlcNAc...) asparagine glycan is attached at Asn-165. Substrate-binding positions include 198 to 199 and 263 to 264; these read WS and RD. The N-linked (GlcNAc...) asparagine glycan is linked to Asn-275. Residues Glu-322 and Asp-362 each coordinate substrate. An N-linked (GlcNAc...) asparagine glycan is attached at Asn-518. Cys-519 and Cys-567 form a disulfide bridge. 2 N-linked (GlcNAc...) asparagine glycosylation sites follow: Asn-595 and Asn-639.

Belongs to the glycosyl hydrolase 32 family. May be present in two forms, a 70 kDa monomer and a heterodimer of the 30 kDa and 38 kDa subunits. The ratio of the levels of the two forms within cells appears to be regulated developmentally.

It is found in the membrane. The protein resides in the vacuole lumen. It catalyses the reaction Hydrolysis of terminal non-reducing beta-D-fructofuranoside residues in beta-D-fructofuranosides.. The protein operates within glycan biosynthesis; sucrose metabolism. In Zea mays (Maize), this protein is Beta-fructofuranosidase 1 (IVR1).